Consider the following 409-residue polypeptide: Gamma-glutamyl phosphate reductase (409 aa).

This sequence belongs to the gamma-glutamyl phosphate reductase family.

Its subcellular location is the cytoplasm. It catalyses the reaction L-glutamate 5-semialdehyde + phosphate + NADP(+) = L-glutamyl 5-phosphate + NADPH + H(+). It functions in the pathway amino-acid biosynthesis; L-proline biosynthesis; L-glutamate 5-semialdehyde from L-glutamate: step 2/2. Its function is as follows. Catalyzes the NADPH-dependent reduction of L-glutamate 5-phosphate into L-glutamate 5-semialdehyde and phosphate. The product spontaneously undergoes cyclization to form 1-pyrroline-5-carboxylate. The chain is Gamma-glutamyl phosphate reductase from Koribacter versatilis (strain Ellin345).